The primary structure comprises 231 residues: 5'-methylthioadenosine/S-adenosylhomocysteine nucleosidase (231 aa).

Residue E12 is the Proton acceptor of the active site. Substrate is bound by residues G78, V153, and 174 to 175 (ME). The active-site Proton donor is the D198.

The protein belongs to the PNP/UDP phosphorylase family. MtnN subfamily.

The catalysed reaction is S-adenosyl-L-homocysteine + H2O = S-(5-deoxy-D-ribos-5-yl)-L-homocysteine + adenine. The enzyme catalyses S-methyl-5'-thioadenosine + H2O = 5-(methylsulfanyl)-D-ribose + adenine. It catalyses the reaction 5'-deoxyadenosine + H2O = 5-deoxy-D-ribose + adenine. It participates in amino-acid biosynthesis; L-methionine biosynthesis via salvage pathway; S-methyl-5-thio-alpha-D-ribose 1-phosphate from S-methyl-5'-thioadenosine (hydrolase route): step 1/2. Catalyzes the irreversible cleavage of the glycosidic bond in both 5'-methylthioadenosine (MTA) and S-adenosylhomocysteine (SAH/AdoHcy) to adenine and the corresponding thioribose, 5'-methylthioribose and S-ribosylhomocysteine, respectively. Also cleaves 5'-deoxyadenosine, a toxic by-product of radical S-adenosylmethionine (SAM) enzymes, into 5-deoxyribose and adenine. This is 5'-methylthioadenosine/S-adenosylhomocysteine nucleosidase from Vibrio atlanticus (strain LGP32) (Vibrio splendidus (strain Mel32)).